The primary structure comprises 376 residues: Endo-1,4-beta-xylanase A (376 aa).

Positions 1 to 18 are cleaved as a signal peptide; it reads MHLASSLFLLATLPFGFA. One can recognise a GH10 domain in the interval 55–355; that stretch reads QRERAGLEDK…HPAYYGVVEA (301 aa). N-linked (GlcNAc...) asparagine glycosylation is present at N100. E170 serves as the catalytic Proton donor. E277 serves as the catalytic Nucleophile. N358 carries N-linked (GlcNAc...) asparagine glycosylation.

This sequence belongs to the glycosyl hydrolase 10 (cellulase F) family.

The protein localises to the secreted. It carries out the reaction Endohydrolysis of (1-&gt;4)-beta-D-xylosidic linkages in xylans.. It participates in glycan degradation; xylan degradation. Its activity is regulated as follows. Partial inhibition of activity is detected in the presence of Ag(+), Cu2(+) and SDS. Like most fungal xylanases, activity is completely inhibited by Hg(2+) since Hg(2+) could interact with tryptophan residues and oxidize the indole ring. Beta-mercaptoethanol enhances the enzymatic activity by counteracting the oxidation effects of the S-S linkage between cysteine residues. Endo-1,4-beta-xylanase involved in the hydrolysis of xylan, a major structural heterogeneous polysaccharide found in plant biomass representing the second most abundant polysaccharide in the biosphere, after cellulose. Is most active on birchwood xylan (defined as 100%), moderate on beechwood xylan (96.8%) and soluble wheat arabinoxylan (84.5%), and weak on insoluble wheat arabinoxylan (19.7%). Hydrolyzes substrates into a mixture of xylobiose and xylotriose, but no xylose. No activity was detected in the presence of barley beta-glucan, carboxymethyl cellulose-sodium (CMC-Na), and Avicel. Acts as an alkali-tolerant xylanase, exhibiting 68.8% of the activity at pH 9.0, and even 31.8% at pH 10.0. This is Endo-1,4-beta-xylanase A from Humicola insolens (Soft-rot fungus).